The sequence spans 655 residues: Bifunctional lysine-specific demethylase and histidyl-hydroxylase NO66 (655 aa).

A compositionally biased stretch (polar residues) spans 1–16 (MEKVTNSAAAKPQGNN). Disordered regions lie at residues 1–48 (MEKV…LSDM) and 67–122 (EDTD…QGAS). Residues 76 to 86 (STSSKEAAAAK) show a composition bias toward low complexity. Positions 87-96 (TADHERRLQA) are enriched in basic and acidic residues. A Phosphoserine modification is found at Ser-131. Thr-137 bears the Phosphothreonine mark. Position 138 is a phosphoserine (Ser-138). A disordered region spans residues 185–210 (KAPEEGNNNNDEKEMSTETSEPHKTD). The span at 194 to 210 (NDEKEMSTETSEPHKTD) shows a compositional bias: basic and acidic residues. Residues 307 to 452 (CSIRLLHASA…NLLETLMPMV (146 aa)) form the JmjC domain. Fe cation contacts are provided by His-353, Asp-355, and His-418.

It belongs to the ROX family. NO66 subfamily. Requires Fe(2+) as cofactor.

The protein resides in the nucleus. The catalysed reaction is N(6),N(6)-dimethyl-L-lysyl(36)-[histone H3] + 2 2-oxoglutarate + 2 O2 = L-lysyl(36)-[histone H3] + 2 formaldehyde + 2 succinate + 2 CO2. Oxygenase that can act as both a histone lysine demethylase and a ribosomal histidine hydroxylase. Specifically demethylates 'Lys-4' (H3K4me) and 'Lys-36' (H3K36me) of histone H3, thereby playing a central role in histone code. The polypeptide is Bifunctional lysine-specific demethylase and histidyl-hydroxylase NO66 (Drosophila sechellia (Fruit fly)).